We begin with the raw amino-acid sequence, 130 residues long: Small ribosomal subunit protein uS11 (130 aa).

The protein belongs to the universal ribosomal protein uS11 family. As to quaternary structure, part of the 30S ribosomal subunit. Interacts with proteins S7 and S18. Binds to IF-3.

In terms of biological role, located on the platform of the 30S subunit, it bridges several disparate RNA helices of the 16S rRNA. Forms part of the Shine-Dalgarno cleft in the 70S ribosome. The chain is Small ribosomal subunit protein uS11 from Rippkaea orientalis (strain PCC 8801 / RF-1) (Cyanothece sp. (strain PCC 8801)).